A 167-amino-acid polypeptide reads, in one-letter code: Crossover junction endodeoxyribonuclease RuvC (167 aa).

Active-site residues include Asp14, Glu75, and Asp147. Mg(2+) contacts are provided by Asp14, Glu75, and Asp147.

This sequence belongs to the RuvC family. As to quaternary structure, homodimer which binds Holliday junction (HJ) DNA. The HJ becomes 2-fold symmetrical on binding to RuvC with unstacked arms; it has a different conformation from HJ DNA in complex with RuvA. In the full resolvosome a probable DNA-RuvA(4)-RuvB(12)-RuvC(2) complex forms which resolves the HJ. Mg(2+) serves as cofactor.

It is found in the cytoplasm. It carries out the reaction Endonucleolytic cleavage at a junction such as a reciprocal single-stranded crossover between two homologous DNA duplexes (Holliday junction).. Functionally, the RuvA-RuvB-RuvC complex processes Holliday junction (HJ) DNA during genetic recombination and DNA repair. Endonuclease that resolves HJ intermediates. Cleaves cruciform DNA by making single-stranded nicks across the HJ at symmetrical positions within the homologous arms, yielding a 5'-phosphate and a 3'-hydroxyl group; requires a central core of homology in the junction. The consensus cleavage sequence is 5'-(A/T)TT(C/G)-3'. Cleavage occurs on the 3'-side of the TT dinucleotide at the point of strand exchange. HJ branch migration catalyzed by RuvA-RuvB allows RuvC to scan DNA until it finds its consensus sequence, where it cleaves and resolves the cruciform DNA. The chain is Crossover junction endodeoxyribonuclease RuvC from Synechocystis sp. (strain ATCC 27184 / PCC 6803 / Kazusa).